Here is a 685-residue protein sequence, read N- to C-terminus: MSLTPTNEILFHYKSSVKVGELERYVITYHLYDGEEIPPDLNLNSLWLKVRNMNPLSYRAAYLMGPFMLYCDVKTAQYHHSQKIVASVDYPKFEPNVQTQQDFVAELSVHNIRQKYVWIADVMSQILFTTNTNVTYEVTIGTSKESVENPHDLPSHLGSYSPKLTVNRLTTLDLWNLPVQITTPQKKKHLVVLTHGLHSNVSTDLVYIMEQIYKAQKNYPHEQIVVKGYRGNVCQTEKGVKYLGTRLAEYIIQDLYDESIRKISFVGHSLGGLIQAFAIAYIYEVYPWFFKKVNPINFITLASPLLGIVTDNPAYIKVLLSFGVIGKTGQDLGLENDVEVGKPLLYLLSGLPLIEILRRFKRRTVYANAINDGIVPLYTASLLFLDYNDILEQLQKLKENSKKSPLINDASTPVNQDFFNKTFISPLTKMLSILAPQKFPTENGSEIPKVSFFESASSILLPPLPERAYIMDPDSRDPVIIHDKIYNEDDIPQSEFDIEDGFFGKKNILLQAFFAGKKERAKYRNLEETIARRWHEGMAWRKVVVALKPDAHNNIIVRRKFANAYGWPVIDHLIDVHFNGDDDDDNDENDDINSTQVVEPIQSVTEGKKKYRKAENIPQEYGWLNKVETNGVFDEGPTGMISTVGEIVEALAKRGFSAVIDRRNASEDPNDEVLRFEEMNSDLVQ.

The active-site Charge relay system is Ser269.

This sequence belongs to the putative lipase ROG1 family.

The protein is Putative lipase ROG1 (ROG1) of Saccharomyces cerevisiae (strain ATCC 204508 / S288c) (Baker's yeast).